Here is a 431-residue protein sequence, read N- to C-terminus: U-box domain-containing protein 20 (431 aa).

The 75-residue stretch at 32–106 folds into the U-box domain; sequence TIPSQFQCPI…QGWCGSSLGG (75 aa).

The catalysed reaction is S-ubiquitinyl-[E2 ubiquitin-conjugating enzyme]-L-cysteine + [acceptor protein]-L-lysine = [E2 ubiquitin-conjugating enzyme]-L-cysteine + N(6)-ubiquitinyl-[acceptor protein]-L-lysine.. Its pathway is protein modification; protein ubiquitination. Functions as an E3 ubiquitin ligase. This Arabidopsis thaliana (Mouse-ear cress) protein is U-box domain-containing protein 20 (PUB20).